Reading from the N-terminus, the 368-residue chain is MNEITHRTKTRPVKVGNLTIGGNNELIIQSMTTTKTHDVEATVAEIKRLEEAGCQIVRVAVPDERAANAIADIKKQINIPLVADIHFDYRLALKAIEGGIDKVRINPGNIGRRHKVEAVVNAAKERGIPIRIGVNAGSLERHILEKYGYPTADGMVESALHHIKILEDLDFHDIIVSMKASDVNLAIEAYEKAARAFDYPLHLGITESGTLFAGTVKSAAGLGAILSKGIGNTLRISLSADPVEEVKVARELLKSFGLASNAATLISCPTCGRIEIDLISIANEVEEYISTLKVPIKVAVLGCAVNGPGEAREADIGIAGARGEGLLFRKGKVVRKVPEETMVEELKKEIDVIAAEMAENQEKEKQEQ.

Cys268, Cys271, Cys303, and Glu310 together coordinate [4Fe-4S] cluster.

This sequence belongs to the IspG family. Requires [4Fe-4S] cluster as cofactor.

The catalysed reaction is (2E)-4-hydroxy-3-methylbut-2-enyl diphosphate + oxidized [flavodoxin] + H2O + 2 H(+) = 2-C-methyl-D-erythritol 2,4-cyclic diphosphate + reduced [flavodoxin]. It participates in isoprenoid biosynthesis; isopentenyl diphosphate biosynthesis via DXP pathway; isopentenyl diphosphate from 1-deoxy-D-xylulose 5-phosphate: step 5/6. Converts 2C-methyl-D-erythritol 2,4-cyclodiphosphate (ME-2,4cPP) into 1-hydroxy-2-methyl-2-(E)-butenyl 4-diphosphate. This chain is 4-hydroxy-3-methylbut-2-en-1-yl diphosphate synthase (flavodoxin), found in Bacillus cytotoxicus (strain DSM 22905 / CIP 110041 / 391-98 / NVH 391-98).